The sequence spans 316 residues: Olfactory receptor 1N2 (316 aa).

The Extracellular segment spans residues 1–28; it reads MGKPGRVNQTTVSDFLLLGLSEWPEEQP. The N-linked (GlcNAc...) asparagine glycan is linked to asparagine 8. A helical membrane pass occupies residues 29 to 49; sequence LLFGIFLGMYLVTMVGNLLII. Residues 50-60 are Cytoplasmic-facing; the sequence is LAISSDPHLHT. The helical transmembrane segment at 61–81 threads the bilayer; sequence PMYFFLANLSLTDACFTSASI. Residues 82 to 100 are Extracellular-facing; that stretch reads PKMLANIHTQSQIISYSGC. Cysteine 100 and cysteine 182 are disulfide-bonded. A helical membrane pass occupies residues 101–121; the sequence is LAQLYFLLMFGGLDNCLLAVM. The Cytoplasmic segment spans residues 122 to 145; the sequence is AYDRYVAICQPLHYSTSMSPQLCA. Residues 146-166 form a helical membrane-spanning segment; the sequence is LMLGVCWVLTNCPALMHTLLL. The Extracellular portion of the chain corresponds to 167 to 199; the sequence is TRVAFCAQKAIPHFYCDPSALLKLACSDTHVNE. Residues 200-220 traverse the membrane as a helical segment; it reads LMIITMGLLFLTVPLLLIVFS. Topologically, residues 221–243 are cytoplasmic; it reads YVRIFWAVFVISSPGGRWKAFST. Residues 244 to 264 traverse the membrane as a helical segment; that stretch reads CGSHLTVVLLFYGSLMGVYLL. The Extracellular portion of the chain corresponds to 265–274; that stretch reads PPSTYSTERE. Residues 275–295 form a helical membrane-spanning segment; that stretch reads SRAAVLYMVIIPTLNPFIYSL. Over 296-316 the chain is Cytoplasmic; the sequence is RNRDMKEALGKLFVSGKTFFL.

This sequence belongs to the G-protein coupled receptor 1 family.

It localises to the membrane. Its function is as follows. Odorant receptor. This Homo sapiens (Human) protein is Olfactory receptor 1N2 (OR1N2).